The sequence spans 564 residues: Kelch repeat and BTB domain-containing protein 1 (564 aa).

Positions 21 to 88 (CDINIVINDE…IYGIPLSLTN (68 aa)) constitute a BTB domain. Residues 123-219 (CIDFYIYADK…SLLSPQVIKS (97 aa)) form the BACK domain. 6 Kelch repeats span residues 252 to 297 (IELI…VLDN), 298 to 346 (IIYM…ADDE), 347 to 395 (YIYC…MLNG), 397 to 441 (IYVI…VHDG), 442 to 492 (KIYI…SAHN), and 494 to 539 (LYVG…CEPI).

Interacts (via BTB domain) with host CUL3.

The protein resides in the host cytoplasm. Probable substrate-specific adapter of CUL3-containing E3 ubiquitin-protein ligases which mediate the ubiquitination and subsequent proteasomal degradation of host target proteins. This is Kelch repeat and BTB domain-containing protein 1 (KBTB1) from Cowpox virus (strain GRI-90 / Grishak) (CPV).